The sequence spans 485 residues: Ribulose bisphosphate carboxylase large chain (485 aa).

Residues 1 to 2 (MS) constitute a propeptide that is removed on maturation. An N-acetylproline modification is found at proline 3. Position 14 is an N6,N6,N6-trimethyllysine (lysine 14). Residues asparagine 123 and threonine 173 each contribute to the substrate site. The Proton acceptor role is filled by lysine 175. Lysine 177 is a binding site for substrate. Lysine 201, aspartate 203, and glutamate 204 together coordinate Mg(2+). Lysine 201 carries the N6-carboxylysine modification. Catalysis depends on histidine 294, which acts as the Proton acceptor. Positions 295, 327, and 379 each coordinate substrate.

This sequence belongs to the RuBisCO large chain family. Type I subfamily. Heterohexadecamer of 8 large chains and 8 small chains; disulfide-linked. The disulfide link is formed within the large subunit homodimers. Mg(2+) is required as a cofactor. The disulfide bond which can form in the large chain dimeric partners within the hexadecamer appears to be associated with oxidative stress and protein turnover.

Its subcellular location is the plastid. It is found in the chloroplast. It carries out the reaction 2 (2R)-3-phosphoglycerate + 2 H(+) = D-ribulose 1,5-bisphosphate + CO2 + H2O. The catalysed reaction is D-ribulose 1,5-bisphosphate + O2 = 2-phosphoglycolate + (2R)-3-phosphoglycerate + 2 H(+). Its function is as follows. RuBisCO catalyzes two reactions: the carboxylation of D-ribulose 1,5-bisphosphate, the primary event in carbon dioxide fixation, as well as the oxidative fragmentation of the pentose substrate in the photorespiration process. Both reactions occur simultaneously and in competition at the same active site. The sequence is that of Ribulose bisphosphate carboxylase large chain from Bartlettina sordida (Purple torch).